Here is a 269-residue protein sequence, read N- to C-terminus: MSKVIKKRVETSPRPTASSDSLQTCAGVIEYAKSISKSNAKCIEYVTLNASQYANCSSISIKLTDSLSSQMTSTFIMLEGETKLYKNKSKQDRSDGYFLKIKVTAASPMLYQLLEAVYGNIKHKERIPNSLHSLSVETITEKTFKDESIFINKLNGAMVEYVSTGESSILRSIEGELESLSKRERQLAKAIITPVVFYRSGTETKITFALKKLIIDREVVANVIGLSGDSERVSMTENVEEDLARNLGLVDIDDEYDEDSDKEKPIFNV.

It belongs to the orthopoxvirus OPG079 family. In terms of assembly, homoomultimer (Potential). Interacts with the small subunit of ribonucleotide reductase. Interacts with host FAM111A; this interaction protomtes OPG079 degradation through autophagy.

The protein resides in the host cytoplasm. Its function is as follows. Plays an essential role in viral DNA replication. Binds to ssDNA with high affinity and localizes to cytoplasmic factories where nascent viral genomes accumulate. May disrupt loops, hairpins and other secondary structures present on ssDNA to reduce and eliminate pausing of viral DNA polymerase at specific sites during elongation. The sequence is that of Protein OPG079 (OPG079) from Bos taurus (Bovine).